The primary structure comprises 407 residues: MKRAFIMVLDSFGIGATEDAERFGDVGADTLGHIAEACAKGKADNGRKGPLNLPNLTRLGLAKAHEGSTGFIPAGMDGNAEVIGAYAWAHEMSSGKDTPSGHWEIAGVPVLFEWGYFSDHENSFPQELLDKLVERANLPGYLGNCHSSGTVILDQLGEEHMKTGKPIFYTSADSVFQIACHEETFGLDKLYELCEIAREELINGGYNIGRVIARPFIGDKAGNFQRTGNRHDLAVEPPAPTVLQKLVDEKHGQVVSVGKIADIYANCGITKKVKATGLDALFDATIKEMKEAGDNTIVFTNFVDFDSSWGHRRDVAGYAAGLELFDRRLPELMSLLRDDDILILTADHGCDPTWTGTDHTREHIPVLVYGPKVKPGSLGHRETFADIGQTLAKYFGTSDMEYGKAMF.

Residues Asp-10, Asp-306, His-311, Asp-347, His-348, and His-359 each coordinate Mn(2+).

Belongs to the phosphopentomutase family. Mn(2+) is required as a cofactor.

It localises to the cytoplasm. The enzyme catalyses 2-deoxy-alpha-D-ribose 1-phosphate = 2-deoxy-D-ribose 5-phosphate. It catalyses the reaction alpha-D-ribose 1-phosphate = D-ribose 5-phosphate. The protein operates within carbohydrate degradation; 2-deoxy-D-ribose 1-phosphate degradation; D-glyceraldehyde 3-phosphate and acetaldehyde from 2-deoxy-alpha-D-ribose 1-phosphate: step 1/2. Isomerase that catalyzes the conversion of deoxy-ribose 1-phosphate (dRib-1-P) and ribose 1-phosphate (Rib-1-P) to deoxy-ribose 5-phosphate (dRib-5-P) and ribose 5-phosphate (Rib-5-P), respectively. This chain is Phosphopentomutase, found in Shigella dysenteriae serotype 1 (strain Sd197).